Consider the following 91-residue polypeptide: Acylphosphatase (91 aa).

An Acylphosphatase-like domain is found at 4-91 (RYLIKVLGRV…DNEKSFKIVY (88 aa)). Active-site residues include Arg19 and Asn37.

It belongs to the acylphosphatase family.

It carries out the reaction an acyl phosphate + H2O = a carboxylate + phosphate + H(+). This is Acylphosphatase (acyP) from Clostridium acetobutylicum (strain ATCC 824 / DSM 792 / JCM 1419 / IAM 19013 / LMG 5710 / NBRC 13948 / NRRL B-527 / VKM B-1787 / 2291 / W).